The following is a 90-amino-acid chain: Serine-rich and transmembrane domain-containing 2 (90 aa).

Asn-11 is a glycosylation site (N-linked (GlcNAc...) asparagine). Residues 38 to 58 (YVGLFLSLLAILLILLFTMLL) traverse the membrane as a helical segment. Residues 69 to 90 (SDSTESVPQFTDVEMQSRIPTP) form a disordered region.

It is found in the membrane. In Homo sapiens (Human), this protein is Serine-rich and transmembrane domain-containing 2.